We begin with the raw amino-acid sequence, 406 residues long: MTFSVDKVRADFPVLSREVNGLPLAYLDSAASAQKPSQVIDAEAEFYRHGYAAVHRGIHTLSAQATEKMENVRKRASLFINARSAEELVFVRGTTEGINLVANSWGNSNVRAGDNIIISQMEHHANIVPWQMLCARVGAELRVIPLNPDGTLQLETLPTLFDEKTRLLAITHVSNVLGTENPLAEMITLAHQHGAKVLVDGAQAVMHHPVDVQALDCDFYVFSVHKLYGPTGIGILYVKEALLQEMPPWEGGGSMIATVSLSEGTTWTKAPWRFEAGTPNTGGIIGLGAALEYVSALGLNNIAEYEQNLMHYALSQLESVPDLTLYGPQNRLGVIAFNLGKHHAYDVGSFLDNYGIAVRTGHHCAMPLMAYYNVPAMCRASLAMYNTHEEVDRLVTGLQRIHRLLG.

Residue Lys226 is modified to N6-(pyridoxal phosphate)lysine. The active-site Cysteine persulfide intermediate is the Cys364.

This sequence belongs to the class-V pyridoxal-phosphate-dependent aminotransferase family. Csd subfamily. As to quaternary structure, homodimer. Interacts with SufE and the SufBCD complex composed of SufB, SufC and SufD. The interaction with SufE is required to mediate the direct transfer of the sulfur atom from the S-sulfanylcysteine. Requires pyridoxal 5'-phosphate as cofactor.

Its subcellular location is the cytoplasm. The enzyme catalyses (sulfur carrier)-H + L-cysteine = (sulfur carrier)-SH + L-alanine. It catalyses the reaction L-selenocysteine + AH2 = hydrogenselenide + L-alanine + A + H(+). Its pathway is cofactor biosynthesis; iron-sulfur cluster biosynthesis. Functionally, cysteine desulfurases mobilize the sulfur from L-cysteine to yield L-alanine, an essential step in sulfur metabolism for biosynthesis of a variety of sulfur-containing biomolecules. Component of the suf operon, which is activated and required under specific conditions such as oxidative stress and iron limitation. Acts as a potent selenocysteine lyase in vitro, that mobilizes selenium from L-selenocysteine. Selenocysteine lyase activity is however unsure in vivo. This is Cysteine desulfurase from Escherichia coli O6:K15:H31 (strain 536 / UPEC).